Consider the following 426-residue polypeptide: Molybdopterin molybdenumtransferase 1 (426 aa).

Belongs to the MoeA family. The cofactor is Mg(2+).

It catalyses the reaction adenylyl-molybdopterin + molybdate = Mo-molybdopterin + AMP + H(+). It participates in cofactor biosynthesis; molybdopterin biosynthesis. Functionally, catalyzes the insertion of molybdate into adenylated molybdopterin with the concomitant release of AMP. This Mycobacterium tuberculosis (strain ATCC 25618 / H37Rv) protein is Molybdopterin molybdenumtransferase 1 (moeA1).